We begin with the raw amino-acid sequence, 67 residues long: Phycobilisome 7.8 kDa linker polypeptide, allophycocyanin-associated, core (67 aa).

The region spanning 1–56 (MRMFRITACLPSPSKIRTQRELQNTFFTKLVPYDAWFREQQRIQKLGGKIIKVELA) is the CpcD-like domain.

The protein belongs to the phycobilisome linker protein family.

The protein resides in the cellular thylakoid membrane. Functionally, rod linker protein, associated with allophycocyanin. Linker polypeptides determine the state of aggregation and the location of the disk-shaped phycobiliprotein units within the phycobilisome and modulate their spectroscopic properties in order to mediate a directed and optimal energy transfer. The chain is Phycobilisome 7.8 kDa linker polypeptide, allophycocyanin-associated, core (apcC) from Synechococcus sp. (strain ATCC 27144 / PCC 6301 / SAUG 1402/1) (Anacystis nidulans).